The primary structure comprises 612 residues: 1,8-cineole synthase, chloroplastic (612 aa).

Residues 1–52 (MALVSGAPLASRSCLNKSLISSTHELKPLRRTILPTLRWKSATPSINMCLTT) constitute a chloroplast transit peptide. Residues Asp363, Asp367, and Asp515 each coordinate Mg(2+). Residues 363–367 (DDIYD) carry the DDXXD motif motif.

This sequence belongs to the terpene synthase family. Tpsd subfamily. Mg(2+) serves as cofactor. It depends on Mn(2+) as a cofactor.

It is found in the plastid. Its subcellular location is the chloroplast. The catalysed reaction is (2E)-geranyl diphosphate + H2O = 1,8-cineole + diphosphate. The protein operates within terpene metabolism; oleoresin biosynthesis. In terms of biological role, terpene synthase (TPS) involved in the biosynthesis of monoterpene natural products included in conifer oleoresin secretions and volatile emissions; these compounds contribute to biotic and abiotic stress defense against herbivores and pathogens. Catalyzes the conversion of (2E)-geranyl diphosphate (GPP) to 1,8-cineole. This Picea engelmannii x Picea glauca (Hybrid white spruce) protein is 1,8-cineole synthase, chloroplastic.